A 7192-amino-acid polypeptide reads, in one-letter code: Nonribosomal peptide synthetase gloA (7192 aa).

The segment covering 1–48 (MTPSRSLENGEKQMNWNESPQTASPKNVLRDSNSNGNYVNGHGTNING) has biased composition (polar residues). The segment at 1-52 (MTPSRSLENGEKQMNWNESPQTASPKNVLRDSNSNGNYVNGHGTNINGDGSD) is disordered. One can recognise a Carrier 1 domain in the interval 105-181 (HSTSKFKEEF…GLFATANFRP (77 aa)). Ser-142 is modified (O-(pantetheine 4'-phosphoryl)serine). The interval 239–634 (EDVYPCTPLQ…TYTVQCLCNP (396 aa)) is condensation 1. An adenylation 1 region spans residues 675–1047 (QDQVNIQPAK…SLMYLGRCDS (373 aa)). Positions 1190–1266 (APSTDAEKQV…DLAFVIQRRL (77 aa)) constitute a Carrier 2 domain. Residue Ser-1227 is modified to O-(pantetheine 4'-phosphoryl)serine. Residues 1316 to 1736 (EDIYPCTPLQ…MSWLSDYDEE (421 aa)) are condensation 2. Residues 1758 to 2154 (QEQTKLRPNA…GRRDTQIKIR (397 aa)) form an adenylation 2 region. The Carrier 3 domain occupies 2288 to 2364 (APSTREECLV…ELAELLAKRS (77 aa)). Position 2325 is an O-(pantetheine 4'-phosphoryl)serine (Ser-2325). Residues 2407-2829 (VEDVYPCTPL…LIAPEDQEQI (423 aa)) form a condensation 3 region. The adenylation 3 stretch occupies residues 2849–3245 (YKQVMARPQA…GRRDDQIKIR (397 aa)). The 78-residue stretch at 3378-3455 (TPSTKMEKVI…DLASVMTEHR (78 aa)) folds into the Carrier 4 domain. Ser-3415 bears the O-(pantetheine 4'-phosphoryl)serine mark. The segment at 3502 to 3891 (EDIYPCTALQ…NGVLDQFVYI (390 aa)) is condensation 4. Positions 3920-4320 (QEQALARPTA…ARRDMQVKIR (401 aa)) are adenylation 4. Residues 4453-4529 (LPSTQVELQL…ELAVILDGRK (77 aa)) form the Carrier 5 domain. Ser-4490 carries the post-translational modification O-(pantetheine 4'-phosphoryl)serine. The interval 4574 to 4971 (EDIYPCTPLQ…QFEYVVQKFH (398 aa)) is condensation 5. The adenylation 5 stretch occupies residues 5013–5414 (DDHVAARPMA…GRQDLQVKIR (402 aa)). In terms of domain architecture, Carrier 6 spans 5551–5627 (APDTDLGRLI…DLVNTLSNRS (77 aa)). Ser-5588 carries the post-translational modification O-(pantetheine 4'-phosphoryl)serine. The tract at residues 5674-6071 (EDVYPSTPLQ…CVVQRILTQS (398 aa)) is condensation 6. Residues 6111–6507 (QAQVKKSPAA…GRRDLQVKIR (397 aa)) are adenylation 6. Residues 6645-6721 (NPSTTMERQL…DLAVVLTDRL (77 aa)) form the Carrier 7 domain. Ser-6682 is subject to O-(pantetheine 4'-phosphoryl)serine. Residues 6795-7178 (NGPCDTRALK…NPLSPVKQVL (384 aa)) form a condensation 7 region.

This sequence belongs to the NRP synthetase family.

The protein operates within mycotoxin biosynthesis. Nonribosomal peptide synthetase; part of the gene cluster that mediates the biosynthesis of pneumocandins, lipohexapeptides of the echinocandin family that prevent fungal cell wall formation by non-competitive inhibition of beta-1,3-glucan synthase. The 10,12-dimethylmyristoyl side chain is synthesized by the reducing polyketide synthase gloL/GLPKS4. The thioesterase gloN/GLHYD exclusively interacts with gloL/GLPKS4 to maintain turnover of the polyketide side chain. The 10R,12S-dimethylmyristic acid is then transferred to the first thiolation domain of the nonribosomal peptide synthetase gloA/GLNRPS4 by the acyl-AMP ligase gloD/GLligase, followed by its acylation to L-ornithine to trigger elongation of the cyclic hexapeptide. L-ornithine, 4R-hydroxyl-L-proline (generated from L-proline by the dioxygenase gloF/GLOXY2), 3S-hydroxyl-L-homotyrosine (generated by gloG/GLHtyB, gloH/GLHtyA, gloI/GLHtyC, gloJ/GLHtyD and hydroxylated at C-3 by the dioxygenase gloM/GLOXY1), 3R-hydroxyl-L-glutamine (generated from L-glutamine probably by the dioxygenase gloE/GLOXY3) and 3S-hydroxyl-L-proline (generated from L-proline by the dioxygenase gloF/GLOXY2 to yield pneumocandin B0), or 3S-hydroxyl-4S-methyl-L-proline (generated from L-leucine by the dioxygenase gloC/GLOXY4 to yield pneumocandin A0) are sequentially added to the growing chain. The last C domain of gloA/GLNRPS4 is proposed to be responsible for cyclization by condensation to form the peptide bond between L-ornithine and 3S-hydroxyl-4S-methyl-L-proline (for pneumocandin A0) or 3S-hydroxyl-L-proline (for pneumocandin B0). Finally, the subsequent C-4 hydroxylation of 3S-hydroxyl-L-homotyrosine and L-ornithine dihydroxylation at C-4 and C-5 are performed by the cytochrome P450 monooxygenases gloP/GLP450-1 and gloO/GLP450-2, respectively. The protein is Nonribosomal peptide synthetase gloA of Glarea lozoyensis (strain ATCC 20868 / MF5171).